Here is a 207-residue protein sequence, read N- to C-terminus: Neuroendocrine protein 7B2 (207 aa).

Positions 1–22 (MVSTMLSGLVLWLTFGWTPALA) are cleaved as a signal peptide. Residues Cys116 and Cys125 are joined by a disulfide bond. Ser136 and Ser200 each carry phosphoserine. The interval 168 to 207 (KGGQRRKRRSVNPYLQGQRLDNVVAKKSVPHFSDEDKDPE) is disordered.

Belongs to the 7B2 family. In terms of assembly, interacts with PCSK2/PC2 early in the secretory pathway. Dissociation occurs at later stages. Post-translationally, proteolytically cleaved in the Golgi by a furin-like convertase to generate bioactive peptides. In terms of processing, sulfated on tyrosine residues.

Its subcellular location is the secreted. Acts as a molecular chaperone for PCSK2/PC2, preventing its premature activation in the regulated secretory pathway. Binds to inactive PCSK2 in the endoplasmic reticulum and facilitates its transport from there to later compartments of the secretory pathway where it is proteolytically matured and activated. Also required for cleavage of PCSK2 but does not appear to be involved in its folding. Plays a role in regulating pituitary hormone secretion. The C-terminal peptide inhibits PCSK2 in vitro. This Sus scrofa (Pig) protein is Neuroendocrine protein 7B2 (SCG5).